We begin with the raw amino-acid sequence, 125 residues long: Small ribosomal subunit protein uS13 (125 aa).

The protein belongs to the universal ribosomal protein uS13 family. As to quaternary structure, part of the 30S ribosomal subunit. Forms a loose heterodimer with protein S19. Forms two bridges to the 50S subunit in the 70S ribosome.

Its function is as follows. Located at the top of the head of the 30S subunit, it contacts several helices of the 16S rRNA. In the 70S ribosome it contacts the 23S rRNA (bridge B1a) and protein L5 of the 50S subunit (bridge B1b), connecting the 2 subunits; these bridges are implicated in subunit movement. Contacts the tRNAs in the A and P-sites. This chain is Small ribosomal subunit protein uS13, found in Rickettsia typhi (strain ATCC VR-144 / Wilmington).